Here is a 179-residue protein sequence, read N- to C-terminus: GTP-dependent dephospho-CoA kinase (179 aa).

Residues Asp-55, Val-57, Asp-74, Lys-76, and Glu-128 each contribute to the GTP site.

This sequence belongs to the GTP-dependent DPCK family.

The catalysed reaction is 3'-dephospho-CoA + GTP = GDP + CoA + H(+). Its pathway is cofactor biosynthesis; coenzyme A biosynthesis. Functionally, catalyzes the GTP-dependent phosphorylation of the 3'-hydroxyl group of dephosphocoenzyme A to form coenzyme A (CoA). The polypeptide is GTP-dependent dephospho-CoA kinase (Saccharolobus islandicus (strain M.16.27) (Sulfolobus islandicus)).